Here is a 156-residue protein sequence, read N- to C-terminus: Small ribosomal subunit protein uS7 (156 aa).

This sequence belongs to the universal ribosomal protein uS7 family. In terms of assembly, part of the 30S ribosomal subunit. Contacts proteins S9 and S11.

Its function is as follows. One of the primary rRNA binding proteins, it binds directly to 16S rRNA where it nucleates assembly of the head domain of the 30S subunit. Is located at the subunit interface close to the decoding center, probably blocks exit of the E-site tRNA. This chain is Small ribosomal subunit protein uS7, found in Bordetella petrii (strain ATCC BAA-461 / DSM 12804 / CCUG 43448).